A 223-amino-acid chain; its full sequence is MTGTPGAATAGDGEAPERSPPFSPNYDLTGKVMLLGDSGVGKTCFLIQFKDGAFLSGTFIATVGIDSRNKVVTVDGARVKLQIWDTAGQERFRSVTHAYYRDAQALLLLYDITNQSSFDNIRAWLTEIHEYAQRDVVIMLLGNKADVSSERVIRSEDGETLAREYGVPFMETSAKTGMNVELAFLAIAKELKYRAGRQPDEPSFQIRDYVESQKKRSSCCSFV.

Positions 1-13 (MTGTPGAATAGDG) are enriched in low complexity. Residues 1 to 22 (MTGTPGAATAGDGEAPERSPPF) are disordered. N-acetylthreonine is present on T2. The GTP site is built by S38, G39, V40, G41, K42, T43, C44, and T62. T43 serves as a coordination point for Mg(2+). 2 short sequence motifs (switch) span residues 52–67 (GAFLSGTFIATVGIDS) and 85–102 (DTAGQERFRSVTHAYYRD). T62 and D85 together coordinate Mg(2+). GTP contacts are provided by G88, N143, K144, D146, S173, A174, and K175. Residues C219 and C220 are each lipidated (S-geranylgeranyl cysteine). C220 carries the cysteine methyl ester modification. Residues 221 to 223 (SFV) constitute a propeptide, removed in mature form.

It belongs to the small GTPase superfamily. Rab family. Interacts with RIMS1. Interacts (in GDP-bound form) with RPGR, RPGR functions as guanine exchange factor (GEF). It depends on Mg(2+) as a cofactor. In terms of tissue distribution, expressed in the retina (at protein level). Specifically expressed in the bone marrow mast cells.

It is found in the cytoplasmic vesicle. Its subcellular location is the cell projection. It localises to the cilium. It carries out the reaction GTP + H2O = GDP + phosphate + H(+). With respect to regulation, regulated by guanine nucleotide exchange factors (GEFs) including RPGR which promote the exchange of bound GDP for free GTP. Regulated by GTPase activating proteins (GAPs) which increase the GTP hydrolysis activity. Inhibited by GDP dissociation inhibitors (GDIs). Its function is as follows. The small GTPases Rab are key regulators of intracellular membrane trafficking, from the formation of transport vesicles to their fusion with membranes. Rabs cycle between an inactive GDP-bound form and an active GTP-bound form that is able to recruit to membranes different sets of downstream effectors directly responsible for vesicle formation, movement, tethering and fusion. Acts as an organizer for autophagosome biogenesis in a GTP-dependent manner. Involved in retinal homeostasis by autophagy regulation. This Mus musculus (Mouse) protein is Ras-related protein Rab-37.